A 454-amino-acid chain; its full sequence is MNSKLSLFDIRTFLESCLLSVTNLSEDIRINNICTDTRSLVSGDLFLALRGESFDGHSFIPQALTAGAIAVVTDRPVEGLGETVAQFLVEDTLVAYQHIAAGWRQRFTIPIIGVTGSVGKTTTKELIAAVLSQFGNVHKTRANYNNEIGVPKTLLELSPDHDFAIVEMAMRGRGQIALLADIAKPTIGLITNVGTAHIGLLGSELAIAEAKCELLAHQPPESTAILNRDNALLMETAQRFWQGKTITYGLEGGDVHGTVDGENLILDGVSLPLPLAGVHNASNYLAAIALAQCLGLDWQQLQSGLTVELPKGRARRYQWGQDVVLLDETYNDGLESMLASLDLLANTPGKRRLAVLGAMKELGDYGPTFHQRVGAKVKALGLDGLFLLANDPNTDAIAAGANGVETQSFSDGPSLVAALKTTLQPGDRLLFKASNSVGLGAVVSQLLAENPTSV.

Residue 116-122 (GSVGKTT) coordinates ATP.

It belongs to the MurCDEF family. MurF subfamily.

The protein resides in the cytoplasm. It catalyses the reaction D-alanyl-D-alanine + UDP-N-acetyl-alpha-D-muramoyl-L-alanyl-gamma-D-glutamyl-meso-2,6-diaminopimelate + ATP = UDP-N-acetyl-alpha-D-muramoyl-L-alanyl-gamma-D-glutamyl-meso-2,6-diaminopimeloyl-D-alanyl-D-alanine + ADP + phosphate + H(+). Its pathway is cell wall biogenesis; peptidoglycan biosynthesis. Involved in cell wall formation. Catalyzes the final step in the synthesis of UDP-N-acetylmuramoyl-pentapeptide, the precursor of murein. This Synechocystis sp. (strain ATCC 27184 / PCC 6803 / Kazusa) protein is UDP-N-acetylmuramoyl-tripeptide--D-alanyl-D-alanine ligase.